A 102-amino-acid chain; its full sequence is Putative UPF0320 protein YMR326C (102 aa).

This sequence belongs to the UPF0320 family.

The protein is Putative UPF0320 protein YMR326C of Saccharomyces cerevisiae (strain ATCC 204508 / S288c) (Baker's yeast).